We begin with the raw amino-acid sequence, 225 residues long: Thymidylate kinase (225 aa).

Position 10–17 (10–17 (GIDGAGKS)) interacts with ATP.

Belongs to the thymidylate kinase family.

It catalyses the reaction dTMP + ATP = dTDP + ADP. Functionally, phosphorylation of dTMP to form dTDP in both de novo and salvage pathways of dTTP synthesis. The polypeptide is Thymidylate kinase (Polaromonas sp. (strain JS666 / ATCC BAA-500)).